Here is a 184-residue protein sequence, read N- to C-terminus: Guanylate kinase (184 aa).

The Guanylate kinase-like domain occupies 5-183 (KKLIILTGPS…TAKRIIKLIQ (179 aa)). Residue 12–19 (GPSGVGKG) coordinates ATP.

The protein belongs to the guanylate kinase family.

Its subcellular location is the cytoplasm. The enzyme catalyses GMP + ATP = GDP + ADP. Functionally, essential for recycling GMP and indirectly, cGMP. This is Guanylate kinase from Prochlorococcus marinus (strain MIT 9312).